The following is a 346-amino-acid chain: Protein MelA (346 aa).

VOC domains are found at residues 12–141 (GIEF…DFEA) and 155–305 (EVDH…IFTK). Fe cation contacts are provided by H158, H237, and E314.

It belongs to the 4HPPD family. Requires Fe cation as cofactor.

It localises to the cytoplasm. Its pathway is pigment biosynthesis; melanin biosynthesis. The polypeptide is Protein MelA (melA) (Shewanella colwelliana (Alteromonas colwelliana)).